A 64-amino-acid polypeptide reads, in one-letter code: Large ribosomal subunit protein bL35 (64 aa).

This sequence belongs to the bacterial ribosomal protein bL35 family.

This chain is Large ribosomal subunit protein bL35, found in Ureaplasma urealyticum serovar 10 (strain ATCC 33699 / Western).